Reading from the N-terminus, the 379-residue chain is Galactose-1-phosphate uridylyltransferase (379 aa).

The segment at 1-21 (MSRSGTDPQQRQQASEADAAA) is disordered. Residues 9 to 21 (QQRQQASEADAAA) show a composition bias toward low complexity. Position 75 (cysteine 75) interacts with Zn(2+). UDP-alpha-D-glucose is bound by residues alanine 81, 97 to 98 (ND), and asparagine 173. Residue histidine 184 participates in Zn(2+) binding. Histidine 186 functions as the Tele-UMP-histidine intermediate in the catalytic mechanism. Glutamine 188 is a UDP-alpha-D-glucose binding site. Residues glutamate 202, histidine 301, histidine 319, and histidine 321 each contribute to the Zn(2+) site. Residues 334–337 (KFMV) and 339–340 (YE) each bind UDP-alpha-D-glucose.

Belongs to the galactose-1-phosphate uridylyltransferase type 1 family. Homodimer. Zn(2+) is required as a cofactor.

The catalysed reaction is alpha-D-galactose 1-phosphate + UDP-alpha-D-glucose = alpha-D-glucose 1-phosphate + UDP-alpha-D-galactose. Its pathway is carbohydrate metabolism; galactose metabolism. Plays an important role in galactose metabolism. This chain is Galactose-1-phosphate uridylyltransferase (GALT), found in Homo sapiens (Human).